The sequence spans 230 residues: Probable septum site-determining protein MinC (230 aa).

This sequence belongs to the MinC family. In terms of assembly, interacts with MinD and FtsZ.

In terms of biological role, cell division inhibitor that blocks the formation of polar Z ring septums. Rapidly oscillates between the poles of the cell to destabilize FtsZ filaments that have formed before they mature into polar Z rings. Prevents FtsZ polymerization. In Erwinia tasmaniensis (strain DSM 17950 / CFBP 7177 / CIP 109463 / NCPPB 4357 / Et1/99), this protein is Probable septum site-determining protein MinC.